The following is a 262-amino-acid chain: Phosphatidylglycerol--prolipoprotein diacylglyceryl transferase 1 (262 aa).

The next 4 helical transmembrane spans lie at Trp15–Ala35, Leu40–Ala60, Gln83–Cys103, and Val108–Gly128. Arg129 provides a ligand contact to a 1,2-diacyl-sn-glycero-3-phospho-(1'-sn-glycerol). 3 consecutive transmembrane segments (helical) span residues Thr169–Tyr189, Gly197–Leu217, and Val229–Val249.

Belongs to the Lgt family.

It is found in the cell membrane. It carries out the reaction L-cysteinyl-[prolipoprotein] + a 1,2-diacyl-sn-glycero-3-phospho-(1'-sn-glycerol) = an S-1,2-diacyl-sn-glyceryl-L-cysteinyl-[prolipoprotein] + sn-glycerol 1-phosphate + H(+). It functions in the pathway protein modification; lipoprotein biosynthesis (diacylglyceryl transfer). In terms of biological role, catalyzes the transfer of the diacylglyceryl group from phosphatidylglycerol to the sulfhydryl group of the N-terminal cysteine of a prolipoprotein, the first step in the formation of mature lipoproteins. The polypeptide is Phosphatidylglycerol--prolipoprotein diacylglyceryl transferase 1 (Clostridium perfringens (strain 13 / Type A)).